The primary structure comprises 124 residues: Large ribosomal subunit protein uL18 (124 aa).

It belongs to the universal ribosomal protein uL18 family. Part of the 50S ribosomal subunit; part of the 5S rRNA/L5/L18/L25 subcomplex. Contacts the 5S and 23S rRNAs.

This is one of the proteins that bind and probably mediate the attachment of the 5S RNA into the large ribosomal subunit, where it forms part of the central protuberance. This chain is Large ribosomal subunit protein uL18, found in Orientia tsutsugamushi (strain Ikeda) (Rickettsia tsutsugamushi).